The primary structure comprises 327 residues: COP9 signalosome complex subunit 6 (327 aa).

Residues 41-174 (VALHPLVILN…VSVFESVIDI (134 aa)) enclose the MPN domain. The interaction with Vpr stretch occupies residues 211-327 (SGENSTVAEH…IGRRMRGLFF (117 aa)).

This sequence belongs to the peptidase M67A family. CSN6 subfamily. As to quaternary structure, component of the CSN complex, composed of COPS1/GPS1, COPS2, COPS3, COPS4, COPS5, COPS6, COPS7 (COPS7A or COPS7B), COPS8 and COPS9 isoform 1. In the complex, it probably interacts directly with COPS2, COPS4, COPS5, COPS7 (COPS7A or COPS7B) and COPS9 isoform 1. Interacts with the translation initiation factor EIF3S6. Interacts weakly with RBX1. Directly interacts with COP1 and 14-3-3 protein sigma/SFN. Interacts with ERCC6. In terms of assembly, (Microbial infection) Interacts with the HIV-1 protein Vpr. In terms of tissue distribution, widely expressed.

It is found in the nucleus. Its subcellular location is the cytoplasm. The protein resides in the perinuclear region. Functionally, component of the COP9 signalosome complex (CSN), a complex involved in various cellular and developmental processes. The CSN complex is an essential regulator of the ubiquitin (Ubl) conjugation pathway by mediating the deneddylation of the cullin subunits of SCF-type E3 ligase complexes, leading to decrease the Ubl ligase activity of SCF-type complexes such as SCF, CSA or DDB2. The complex is also involved in phosphorylation of p53/TP53, c-jun/JUN, IkappaBalpha/NFKBIA, ITPK1 and IRF8, possibly via its association with CK2 and PKD kinases. CSN-dependent phosphorylation of TP53 and JUN promotes and protects degradation by the Ubl system, respectively. Has some glucocorticoid receptor-responsive activity. Stabilizes COP1 through reducing COP1 auto-ubiquitination and decelerating COP1 turnover rate, hence regulates the ubiquitination of COP1 targets. The sequence is that of COP9 signalosome complex subunit 6 (COPS6) from Homo sapiens (Human).